Here is a 121-residue protein sequence, read N- to C-terminus: Large ribosomal subunit protein uL18 (121 aa).

Belongs to the universal ribosomal protein uL18 family. As to quaternary structure, part of the 50S ribosomal subunit; part of the 5S rRNA/L5/L18/L25 subcomplex. Contacts the 5S and 23S rRNAs.

This is one of the proteins that bind and probably mediate the attachment of the 5S RNA into the large ribosomal subunit, where it forms part of the central protuberance. The sequence is that of Large ribosomal subunit protein uL18 from Anaplasma phagocytophilum (strain HZ).